Reading from the N-terminus, the 118-residue chain is Small ribosomal subunit protein uS13 (118 aa).

Residues 94–118 (SLPLRGQRTKTNARTRKGPRKPIRK) are disordered.

The protein belongs to the universal ribosomal protein uS13 family. In terms of assembly, part of the 30S ribosomal subunit. Forms a loose heterodimer with protein S19. Forms two bridges to the 50S subunit in the 70S ribosome.

Its function is as follows. Located at the top of the head of the 30S subunit, it contacts several helices of the 16S rRNA. In the 70S ribosome it contacts the 23S rRNA (bridge B1a) and protein L5 of the 50S subunit (bridge B1b), connecting the 2 subunits; these bridges are implicated in subunit movement. Contacts the tRNAs in the A and P-sites. The protein is Small ribosomal subunit protein uS13 of Shewanella woodyi (strain ATCC 51908 / MS32).